The chain runs to 428 residues: Enolase (428 aa).

Glutamine 162 is a binding site for (2R)-2-phosphoglycerate. Glutamate 204 acts as the Proton donor in catalysis. 3 residues coordinate Mg(2+): aspartate 241, glutamate 283, and aspartate 310. (2R)-2-phosphoglycerate is bound by residues lysine 335, arginine 364, serine 365, and lysine 386. The Proton acceptor role is filled by lysine 335.

Belongs to the enolase family. Requires Mg(2+) as cofactor.

Its subcellular location is the cytoplasm. It is found in the secreted. The protein localises to the cell surface. The catalysed reaction is (2R)-2-phosphoglycerate = phosphoenolpyruvate + H2O. It functions in the pathway carbohydrate degradation; glycolysis; pyruvate from D-glyceraldehyde 3-phosphate: step 4/5. In terms of biological role, catalyzes the reversible conversion of 2-phosphoglycerate (2-PG) into phosphoenolpyruvate (PEP). It is essential for the degradation of carbohydrates via glycolysis. This chain is Enolase, found in Nocardia farcinica (strain IFM 10152).